The chain runs to 165 residues: Xanthine-guanine phosphoribosyltransferase (165 aa).

Residues 41-42 (RG) and 98-106 (DDLTDTGKT) contribute to the 5-phospho-alpha-D-ribose 1-diphosphate site. Asp-99 is a binding site for Mg(2+). The guanine site is built by Asp-102 and Ile-145. Asp-102 and Ile-145 together coordinate xanthine. Residues 102 to 106 (DTGKT) and 144 to 145 (WI) contribute to the GMP site.

It belongs to the purine/pyrimidine phosphoribosyltransferase family. XGPT subfamily. In terms of assembly, homotetramer. Mg(2+) is required as a cofactor.

It localises to the cell inner membrane. It carries out the reaction GMP + diphosphate = guanine + 5-phospho-alpha-D-ribose 1-diphosphate. It catalyses the reaction XMP + diphosphate = xanthine + 5-phospho-alpha-D-ribose 1-diphosphate. The enzyme catalyses IMP + diphosphate = hypoxanthine + 5-phospho-alpha-D-ribose 1-diphosphate. Its pathway is purine metabolism; GMP biosynthesis via salvage pathway; GMP from guanine: step 1/1. The protein operates within purine metabolism; XMP biosynthesis via salvage pathway; XMP from xanthine: step 1/1. Functionally, purine salvage pathway enzyme that catalyzes the transfer of the ribosyl-5-phosphate group from 5-phospho-alpha-D-ribose 1-diphosphate (PRPP) to the N9 position of the 6-oxopurines guanine and xanthine to form the corresponding ribonucleotides GMP (guanosine 5'-monophosphate) and XMP (xanthosine 5'-monophosphate), with the release of PPi. To a lesser extent, also acts on hypoxanthine. This is Xanthine-guanine phosphoribosyltransferase from Sinorhizobium medicae (strain WSM419) (Ensifer medicae).